A 998-amino-acid polypeptide reads, in one-letter code: Sensor histidine kinase AruS (998 aa).

3 disordered regions span residues 27 to 82 (ERRP…HARA), 154 to 198 (RQAG…LPAG), and 224 to 245 (RQHP…RQPR). Positions 40–49 (GEAAVRRAGL) are enriched in low complexity. Basic residues predominate over residues 161-183 (HRLHRPRTTHRHAVRRAPGRRRE). The next 2 membrane-spanning stretches (helical) occupy residues 264–284 (VLLF…FFEY) and 395–415 (ASLL…SWLF). The HAMP domain occupies 417-473 (SLVTRHLWRMSEFAGHIAEGDLQQPLRLDKVDRERDEIDAVAAALEDMRQALRTDRR). The region spanning 513 to 734 (TMSHEIRTPL…TFWFEIELAL (222 aa)) is the Histidine kinase domain. H516 bears the Phosphohistidine; by autocatalysis mark. A Response regulatory domain is found at 751-869 (EVLLVEDVAL…ELRRALGEVG (119 aa)). The residue at position 800 (D800) is a 4-aspartylphosphate. Positions 894–987 (GRHKLAGLLG…RDGAEALRRA (94 aa)) constitute an HPt domain. H933 is modified (phosphohistidine).

In terms of processing, autophosphorylated. Activation may require a sequential transfer of a phosphate group from a His in the primary transmitter domain, to an Asp in the receiver domain and to a His in the secondary transmitter domain.

Its subcellular location is the cell membrane. It catalyses the reaction ATP + protein L-histidine = ADP + protein N-phospho-L-histidine.. It participates in amino-acid degradation; L-arginine degradation [regulation]. Its function is as follows. Member of the two-component regulatory system AruS/AruR, which is involved in the regulation of the arginine transaminase (ATA) pathway in response to exogeneous L-arginine. Probably functions as a sensor kinase that phosphorylates AruR. The chain is Sensor histidine kinase AruS (aruS) from Pseudomonas aeruginosa (strain ATCC 15692 / DSM 22644 / CIP 104116 / JCM 14847 / LMG 12228 / 1C / PRS 101 / PAO1).